Here is a 296-residue protein sequence, read N- to C-terminus: 4-hydroxybenzoate octaprenyltransferase (296 aa).

A run of 8 helical transmembrane segments spans residues 28-48, 52-72, 102-122, 146-166, 169-189, 219-239, 241-261, and 275-295; these read PIGI…AAEG, LSHV…GCAI, ALIL…CTNA, YYPQ…TFTA, GELP…TVGY, VIIL…GARF, LGGW…WEFW, and FLHN…DYAL.

It belongs to the UbiA prenyltransferase family. The cofactor is Mg(2+).

It is found in the cell inner membrane. The enzyme catalyses all-trans-octaprenyl diphosphate + 4-hydroxybenzoate = 4-hydroxy-3-(all-trans-octaprenyl)benzoate + diphosphate. It participates in cofactor biosynthesis; ubiquinone biosynthesis. Catalyzes the prenylation of para-hydroxybenzoate (PHB) with an all-trans polyprenyl group. Mediates the second step in the final reaction sequence of ubiquinone-8 (UQ-8) biosynthesis, which is the condensation of the polyisoprenoid side chain with PHB, generating the first membrane-bound Q intermediate 3-octaprenyl-4-hydroxybenzoate. This Pseudomonas fluorescens (strain ATCC BAA-477 / NRRL B-23932 / Pf-5) protein is 4-hydroxybenzoate octaprenyltransferase.